The chain runs to 217 residues: Small ribosomal subunit protein uS3 (217 aa).

Residues 38 to 106 form the KH type-2 domain; that stretch reads IRKFIDNELK…KVHINVIEIK (69 aa).

The protein belongs to the universal ribosomal protein uS3 family. In terms of assembly, part of the 30S ribosomal subunit. Forms a tight complex with proteins S10 and S14.

Its function is as follows. Binds the lower part of the 30S subunit head. Binds mRNA in the 70S ribosome, positioning it for translation. The protein is Small ribosomal subunit protein uS3 of Staphylococcus aureus (strain MSSA476).